The primary structure comprises 861 residues: Probable alpha,alpha-trehalose-phosphate synthase [UDP-forming] 10 (861 aa).

Ser5 carries the phosphoserine modification. A Phosphothreonine modification is found at Thr32. The glycosyltransferase stretch occupies residues 59 to 546; the sequence is ERKIIVANFL…ARSFSQDLER (488 aa).

It in the N-terminal section; belongs to the glycosyltransferase 20 family. The protein in the C-terminal section; belongs to the trehalose phosphatase family.

It catalyses the reaction D-glucose 6-phosphate + UDP-alpha-D-glucose = alpha,alpha-trehalose 6-phosphate + UDP + H(+). This Arabidopsis thaliana (Mouse-ear cress) protein is Probable alpha,alpha-trehalose-phosphate synthase [UDP-forming] 10 (TPS10).